A 427-amino-acid polypeptide reads, in one-letter code: Serine--tRNA ligase (427 aa).

T230–E232 provides a ligand contact to L-serine. R261–E263 contacts ATP. E284 is an L-serine binding site. E348–S351 contributes to the ATP binding site. Position 384 (S384) interacts with L-serine.

The protein belongs to the class-II aminoacyl-tRNA synthetase family. Type-1 seryl-tRNA synthetase subfamily. In terms of assembly, homodimer. The tRNA molecule binds across the dimer.

Its subcellular location is the cytoplasm. It carries out the reaction tRNA(Ser) + L-serine + ATP = L-seryl-tRNA(Ser) + AMP + diphosphate + H(+). It catalyses the reaction tRNA(Sec) + L-serine + ATP = L-seryl-tRNA(Sec) + AMP + diphosphate + H(+). It participates in aminoacyl-tRNA biosynthesis; selenocysteinyl-tRNA(Sec) biosynthesis; L-seryl-tRNA(Sec) from L-serine and tRNA(Sec): step 1/1. In terms of biological role, catalyzes the attachment of serine to tRNA(Ser). Is also able to aminoacylate tRNA(Sec) with serine, to form the misacylated tRNA L-seryl-tRNA(Sec), which will be further converted into selenocysteinyl-tRNA(Sec). The sequence is that of Serine--tRNA ligase from Syntrophomonas wolfei subsp. wolfei (strain DSM 2245B / Goettingen).